Consider the following 194-residue polypeptide: Probable nicotinate-nucleotide adenylyltransferase (194 aa).

This sequence belongs to the NadD family.

The enzyme catalyses nicotinate beta-D-ribonucleotide + ATP + H(+) = deamido-NAD(+) + diphosphate. It functions in the pathway cofactor biosynthesis; NAD(+) biosynthesis; deamido-NAD(+) from nicotinate D-ribonucleotide: step 1/1. In terms of biological role, catalyzes the reversible adenylation of nicotinate mononucleotide (NaMN) to nicotinic acid adenine dinucleotide (NaAD). The chain is Probable nicotinate-nucleotide adenylyltransferase from Brucella abortus (strain 2308).